We begin with the raw amino-acid sequence, 185 residues long: Peptidyl-tRNA hydrolase (185 aa).

A tRNA-binding site is contributed by tyrosine 14. Histidine 19 acts as the Proton acceptor in catalysis. Positions 64, 66, and 112 each coordinate tRNA.

It belongs to the PTH family. Monomer.

It is found in the cytoplasm. It catalyses the reaction an N-acyl-L-alpha-aminoacyl-tRNA + H2O = an N-acyl-L-amino acid + a tRNA + H(+). Hydrolyzes ribosome-free peptidyl-tRNAs (with 1 or more amino acids incorporated), which drop off the ribosome during protein synthesis, or as a result of ribosome stalling. In terms of biological role, catalyzes the release of premature peptidyl moieties from peptidyl-tRNA molecules trapped in stalled 50S ribosomal subunits, and thus maintains levels of free tRNAs and 50S ribosomes. The chain is Peptidyl-tRNA hydrolase from Alkaliphilus metalliredigens (strain QYMF).